Here is a 308-residue protein sequence, read N- to C-terminus: Aliphatic nitrilase (308 aa).

A CN hydrolase domain is found at 4 to 270 (FRAAVVQAAP…ETILTADLDT (267 aa)). Catalysis depends on glutamate 44, which acts as the Proton acceptor. The active site involves lysine 130. Residue cysteine 164 is the Nucleophile of the active site.

This sequence belongs to the carbon-nitrogen hydrolase superfamily. Nitrilase family.

It carries out the reaction a nitrile + 2 H2O = a carboxylate + NH4(+). In terms of biological role, nitrilase that hydrolyzes preferentially phenylacetonitrile, but not (R,S)-mandelonitrile. Also acts on dinitriles like phenylenediacetonitriles (PDAs) 1,2-PDA, 1,3-PDA, and 1,4-PDA, and cyanophenyl acetonitriles (CPAs) 2-CPA and 4-CPA, but with lower activities. The protein is Aliphatic nitrilase (nit) of Sinorhizobium fredii (strain HH103).